We begin with the raw amino-acid sequence, 203 residues long: Peptidyl-tRNA hydrolase (203 aa).

Y16 is a tRNA binding site. H21 acts as the Proton acceptor in catalysis. Positions 68, 70, and 116 each coordinate tRNA.

This sequence belongs to the PTH family. Monomer.

It is found in the cytoplasm. It carries out the reaction an N-acyl-L-alpha-aminoacyl-tRNA + H2O = an N-acyl-L-amino acid + a tRNA + H(+). Functionally, hydrolyzes ribosome-free peptidyl-tRNAs (with 1 or more amino acids incorporated), which drop off the ribosome during protein synthesis, or as a result of ribosome stalling. Catalyzes the release of premature peptidyl moieties from peptidyl-tRNA molecules trapped in stalled 50S ribosomal subunits, and thus maintains levels of free tRNAs and 50S ribosomes. The sequence is that of Peptidyl-tRNA hydrolase from Nostoc sp. (strain PCC 7120 / SAG 25.82 / UTEX 2576).